Consider the following 115-residue polypeptide: Probable 4-amino-4-deoxy-L-arabinose-phosphoundecaprenol flippase subunit ArnE (115 aa).

3 helical membrane passes run P42 to L62, V65 to A85, and V93 to G112. The EamA domain maps to L46 to R113.

It belongs to the ArnE family. As to quaternary structure, heterodimer of ArnE and ArnF.

It localises to the cell inner membrane. Its pathway is bacterial outer membrane biogenesis; lipopolysaccharide biosynthesis. Functionally, translocates 4-amino-4-deoxy-L-arabinose-phosphoundecaprenol (alpha-L-Ara4N-phosphoundecaprenol) from the cytoplasmic to the periplasmic side of the inner membrane. In Pseudomonas aeruginosa (strain LESB58), this protein is Probable 4-amino-4-deoxy-L-arabinose-phosphoundecaprenol flippase subunit ArnE.